A 370-amino-acid chain; its full sequence is Coproporphyrin III ferrochelatase (370 aa).

Fe-coproporphyrin III contacts are provided by Ser58 and Tyr127. Residues His189 and Glu276 each coordinate Fe(2+).

Belongs to the ferrochelatase family.

It localises to the cytoplasm. It carries out the reaction Fe-coproporphyrin III + 2 H(+) = coproporphyrin III + Fe(2+). It functions in the pathway porphyrin-containing compound metabolism; protoheme biosynthesis. Its function is as follows. Involved in coproporphyrin-dependent heme b biosynthesis. Catalyzes the insertion of ferrous iron into coproporphyrin III to form Fe-coproporphyrin III. This Corynebacterium glutamicum (strain R) protein is Coproporphyrin III ferrochelatase.